We begin with the raw amino-acid sequence, 600 residues long: Myelin expression factor 2 (600 aa).

Residues 1–101 (MADANKAEVP…GEKKGPNRNR (101 aa)) form a disordered region. Thr13 bears the Phosphothreonine mark. Position 17 is a phosphoserine (Ser17). Residues 27-42 (GEPRREPHPAEAEKQQ) show a composition bias toward basic and acidic residues. Lys53 participates in a covalent cross-link: Glycyl lysine isopeptide (Lys-Gly) (interchain with G-Cter in SUMO2). Basic and acidic residues-rich tracts occupy residues 54-72 (MENDESAKEEKSDLKEKST) and 83-96 (YSKDKNSGAGEKKG). RRM domains are found at residues 100-178 (NRVF…EDPD) and 233-310 (STIF…MDDK). Arg406 carries the omega-N-methylarginine modification. The residue at position 431 (Ser431) is a Phosphoserine. The region spanning 523 to 599 (NQIFVRNLPF…REIDVRLDRN (77 aa)) is the RRM 3 domain.

Monomer.

The protein resides in the nucleus. In terms of biological role, transcriptional repressor of the myelin basic protein gene (MBP). Binds to the proximal MB1 element 5'-TTGTCC-3' of the MBP promoter. Its binding to MB1 and function are inhibited by PURA. This chain is Myelin expression factor 2 (MYEF2), found in Homo sapiens (Human).